Here is a 78-residue protein sequence, read N- to C-terminus: Translational regulator CsrA (78 aa).

Belongs to the CsrA/RsmA family. As to quaternary structure, homodimer; the beta-strands of each monomer intercalate to form a hydrophobic core, while the alpha-helices form wings that extend away from the core.

Its subcellular location is the cytoplasm. Its function is as follows. A translational regulator that binds mRNA to regulate translation initiation and/or mRNA stability. Usually binds in the 5'-UTR at or near the Shine-Dalgarno sequence preventing ribosome-binding, thus repressing translation. Its main target seems to be the major flagellin gene, while its function is anatagonized by FliW. In Caldicellulosiruptor bescii (strain ATCC BAA-1888 / DSM 6725 / KCTC 15123 / Z-1320) (Anaerocellum thermophilum), this protein is Translational regulator CsrA.